A 116-amino-acid polypeptide reads, in one-letter code: Non-specific lipid-transfer protein (116 aa).

The signal sequence occupies residues 1–22; it reads MSLKLACVVVLCMVVGAPLAQG. 3 disulfide bridges follow: Cys36–Cys52, Cys53–Cys98, and Cys73–Cys112.

The protein belongs to the plant LTP family.

Its function is as follows. Plant non-specific lipid-transfer proteins transfer phospholipids as well as galactolipids across membranes. May play a role in wax or cutin deposition in the cell walls of expanding epidermal cells and certain secretory tissues. The chain is Non-specific lipid-transfer protein from Gossypium hirsutum (Upland cotton).